We begin with the raw amino-acid sequence, 83 residues long: Acid shock protein (83 aa).

An N-terminal signal peptide occupies residues 1–21 (MKKVLALVVAAAMGLSSAAFA). Residues 22–40 (AETATPAKTATPAKTTQNT) are compositionally biased toward low complexity. The propeptide occupies 22-56 (AETATPAKTATPAKTTQNTQHHKKQHKKTVEQKAQ). The tract at residues 22–83 (AETATPAKTA…TSKTTSQPAA (62 aa)) is disordered. Residues 57 to 70 (AAKKHQKKDGKKAP) are compositionally biased toward basic residues. Positions 71–83 (AKSTSKTTSQPAA) are enriched in low complexity.

The protein belongs to the Asr family. Proteolytic processing gives rise to the active protein.

The protein resides in the periplasm. In terms of biological role, required for growth and/or survival at acidic conditions. The polypeptide is Acid shock protein (Salmonella heidelberg (strain SL476)).